The chain runs to 175 residues: uncharacterized protein (175 aa).

One can recognise an HTH marR-type domain in the interval 10-157 (LFELYAELIH…AERLFRDLVT (148 aa)). Residues 68–91 (VTSIAEKMNTTKATVSRISTKLLG) constitute a DNA-binding region (H-T-H motif).

The protein resides in the cytoplasm. This is an uncharacterized protein from Bacillus subtilis (strain 168).